Reading from the N-terminus, the 566-residue chain is Membrane protein insertase YidC (566 aa).

5 helical membrane-spanning segments follow: residues 3-23 (IKRI…FNAW), 346-366 (GWLW…HAVV), 369-389 (WGWS…WFSA), 436-456 (GGCL…YVII), and 509-529 (MWIL…GLVL).

The protein belongs to the OXA1/ALB3/YidC family. Type 1 subfamily. Interacts with the Sec translocase complex via SecD. Specifically interacts with transmembrane segments of nascent integral membrane proteins during membrane integration.

The protein resides in the cell inner membrane. Functionally, required for the insertion and/or proper folding and/or complex formation of integral membrane proteins into the membrane. Involved in integration of membrane proteins that insert both dependently and independently of the Sec translocase complex, as well as at least some lipoproteins. Aids folding of multispanning membrane proteins. This chain is Membrane protein insertase YidC, found in Coxiella burnetii (strain CbuK_Q154) (Coxiella burnetii (strain Q154)).